Consider the following 512-residue polypeptide: Flavonoid 3'-monooxygenase (512 aa).

The helical transmembrane segment at 1-21 threads the bilayer; it reads MEILSLILYTVIFSFLLQFIL. Topologically, residues 22-512 are cytoplasmic; sequence RSFFRKRYPL…PRLEAQAYIG (491 aa). Cys447 contacts heme.

This sequence belongs to the cytochrome P450 family. Requires heme as cofactor. In terms of tissue distribution, high expression in petals and ovaries and to a lower extent in sepals, pedicels, anthers and stems. Not detected in leaves, style or roots.

It is found in the endoplasmic reticulum membrane. The catalysed reaction is a 3'-unsubstituted flavone + reduced [NADPH--hemoprotein reductase] + O2 = a 3'-hydroxyflavone + oxidized [NADPH--hemoprotein reductase] + H2O + H(+). It functions in the pathway secondary metabolite biosynthesis; flavonoid biosynthesis. In terms of biological role, catalyzes the 3'-hydroxylation of the flavonoid B-ring to the 3',4'-hydroxylated state. Convert naringenin to eriodictyol and dihydrokaempferol to dihydroquercetin. In Petunia hybrida (Petunia), this protein is Flavonoid 3'-monooxygenase (CYP75B2).